We begin with the raw amino-acid sequence, 123 residues long: Large ribosomal subunit protein uL14c (123 aa).

Belongs to the universal ribosomal protein uL14 family. As to quaternary structure, part of the 50S ribosomal subunit.

Its subcellular location is the plastid. The protein resides in the chloroplast. Functionally, binds to 23S rRNA. The sequence is that of Large ribosomal subunit protein uL14c from Triticum aestivum (Wheat).